A 240-amino-acid polypeptide reads, in one-letter code: Methylthioribulose-1-phosphate dehydratase (240 aa).

Over residues 1–10 the composition is skewed to basic and acidic residues; it reads MAQEIEKTNN. The disordered stretch occupies residues 1–20; it reads MAQEIEKTNNDHLVQSSDPE. C100 is a binding site for substrate. Zn(2+) contacts are provided by H117 and H119. The active-site Proton donor/acceptor is E146. H202 provides a ligand contact to Zn(2+).

It belongs to the aldolase class II family. MtnB subfamily. Zn(2+) serves as cofactor.

It is found in the cytoplasm. It carries out the reaction 5-(methylsulfanyl)-D-ribulose 1-phosphate = 5-methylsulfanyl-2,3-dioxopentyl phosphate + H2O. It functions in the pathway amino-acid biosynthesis; L-methionine biosynthesis via salvage pathway; L-methionine from S-methyl-5-thio-alpha-D-ribose 1-phosphate: step 2/6. Functionally, catalyzes the dehydration of methylthioribulose-1-phosphate (MTRu-1-P) into 2,3-diketo-5-methylthiopentyl-1-phosphate (DK-MTP-1-P). The protein is Methylthioribulose-1-phosphate dehydratase of Aspergillus fumigatus (strain CBS 144.89 / FGSC A1163 / CEA10) (Neosartorya fumigata).